Here is a 131-residue protein sequence, read N- to C-terminus: Small ribosomal subunit protein uS9 (131 aa).

A disordered region spans residues Ala102–Arg131. The span at Lys112–Arg131 shows a compositional bias: basic residues.

The protein belongs to the universal ribosomal protein uS9 family.

This is Small ribosomal subunit protein uS9 from Desulfitobacterium hafniense (strain DSM 10664 / DCB-2).